Reading from the N-terminus, the 512-residue chain is Putative aldehyde-dehydrogenase-like protein y4uC (512 aa).

A disordered region spans residues 14–41 (MKPERGRRSPLPRRPTRPPDERSSGIGN). 266-271 (GGFATG) contacts NADP(+). Catalysis depends on residues Glu286 and Cys320.

This sequence belongs to the aldehyde dehydrogenase family.

It functions in the pathway amino-acid degradation; 4-aminobutanoate degradation. Could be a succinate-semialdehyde dehydrogenase (NADP(+)). The chain is Putative aldehyde-dehydrogenase-like protein y4uC from Sinorhizobium fredii (strain NBRC 101917 / NGR234).